The primary structure comprises 109 residues: Large ribosomal subunit protein uL22 (109 aa).

Belongs to the universal ribosomal protein uL22 family. In terms of assembly, part of the 50S ribosomal subunit.

Functionally, this protein binds specifically to 23S rRNA; its binding is stimulated by other ribosomal proteins, e.g. L4, L17, and L20. It is important during the early stages of 50S assembly. It makes multiple contacts with different domains of the 23S rRNA in the assembled 50S subunit and ribosome. Its function is as follows. The globular domain of the protein is located near the polypeptide exit tunnel on the outside of the subunit, while an extended beta-hairpin is found that lines the wall of the exit tunnel in the center of the 70S ribosome. The protein is Large ribosomal subunit protein uL22 of Wolinella succinogenes (strain ATCC 29543 / DSM 1740 / CCUG 13145 / JCM 31913 / LMG 7466 / NCTC 11488 / FDC 602W) (Vibrio succinogenes).